The primary structure comprises 59 residues: MGLADRIKKLREDWKRIISVAKKPDKSMFYLNLRVTLIVLLFVGLLAFLVQLAFSILLG.

Residues 37 to 57 (LIVLLFVGLLAFLVQLAFSIL) form a helical membrane-spanning segment.

It belongs to the SecE/SEC61-gamma family. Component of the Sec protein translocase complex. Heterotrimer consisting of SecY (alpha), SecG (beta) and SecE (gamma) subunits. The heterotrimers can form oligomers, although 1 heterotrimer is thought to be able to translocate proteins. Interacts with the ribosome. May interact with SecDF, and other proteins may be involved.

Its subcellular location is the cell membrane. In terms of biological role, essential subunit of the Sec protein translocation channel SecYEG. Clamps together the 2 halves of SecY. May contact the channel plug during translocation. In Metallosphaera sedula (strain ATCC 51363 / DSM 5348 / JCM 9185 / NBRC 15509 / TH2), this protein is Protein translocase subunit SecE.